The primary structure comprises 2871 residues: Fibrillin-1 (2871 aa).

Positions 1–24 (MRRGRLLEIALGFTVLLASYTSHG) are cleaved as a signal peptide. A propeptide spanning residues 25–44 (ADANLEAGNVKETRASRAKR) is cleaved from the precursor. The tract at residues 45–81 (RGGGGHDALKGPNVCGSRYNAYCCPGWKTLPGGNQCI) is fibrillin unique N-terminal (FUN) domain. The N-terminal domain stretch occupies residues 45-450 (RGGGGHDALK…PPRVLPVNVT (406 aa)). 11 disulfide bridges follow: cysteine 59–cysteine 68, cysteine 67–cysteine 80, cysteine 85–cysteine 94, cysteine 89–cysteine 100, cysteine 102–cysteine 111, cysteine 119–cysteine 129, cysteine 123–cysteine 134, cysteine 136–cysteine 145, cysteine 150–cysteine 160, cysteine 154–cysteine 166, and cysteine 168–cysteine 177. 3 consecutive EGF-like domains span residues 81-112 (IVPI…PSCG), 115-146 (SIQH…THCG), and 147-178 (QPVC…PQCE). Residues 119–329 (CNIRCMNGGS…YTSPDGTRCI (211 aa)) are interaction with MFAP4. Residues 184-236 (GPCFTVISNQMCQGQLSGIVCTKTLCCATVGRAWGHPCEMCPAQPHPCRRGFI) enclose the TB 1 domain. Positions 195–221 (CQGQLSGIVCTKTLCCATVGRAWGHPC) are hybrid domain 1. The 42-residue stretch at 246 to 287 (DVDECQAIPGLCQGGNCINTVGSFECKCPAGHKLNEVSQKCE) folds into the EGF-like 4; calcium-binding domain. 6 cysteine pairs are disulfide-bonded: cysteine 250/cysteine 262, cysteine 257/cysteine 271, cysteine 273/cysteine 286, cysteine 292/cysteine 304, cysteine 299/cysteine 313, and cysteine 315/cysteine 328. Serine 268 carries an O-linked (Glc) serine glycan. Residues 288-329 (DIDECSTIPGICEGGECTNTVSSYFCKCPPGFYTSPDGTRCI) form the EGF-like 5; calcium-binding domain. The region spanning 334–389 (GYCYTALTNGRCSNQLPQSITKMQCCCDAGRCWSPGVTVAPEMCPIRATEDFNKLC) is the TB 2 domain. N-linked (GlcNAc...) asparagine glycosylation is present at asparagine 448. Residues 449-489 (VTDYCQLVRYLCQNGRCIPTPGSYRCECNKGFQLDLRGECI) enclose the EGF-like 6 domain. 15 disulfides stabilise this stretch: cysteine 453–cysteine 465, cysteine 460–cysteine 474, cysteine 476–cysteine 488, cysteine 494–cysteine 504, cysteine 499–cysteine 513, cysteine 515–cysteine 528, cysteine 534–cysteine 546, cysteine 541–cysteine 555, cysteine 557–cysteine 570, cysteine 576–cysteine 587, cysteine 582–cysteine 596, cysteine 598–cysteine 611, cysteine 617–cysteine 628, cysteine 623–cysteine 637, and cysteine 639–cysteine 652. An O-linked (Glc) serine glycan is attached at serine 471. The EGF-like 7; calcium-binding domain maps to 490–529 (DVDECEKNPCAGGECINNQGSYTCQCRAGYQSTLTRTECR). An O-linked (Glc) serine glycan is attached at serine 510. One can recognise an EGF-like 8; calcium-binding domain in the interval 530–571 (DIDECLQNGRICNNGRCINTDGSFHCVCNAGFHVTRDGKNCE). A glycan (O-linked (Glc) serine) is linked at serine 552. The 41-residue stretch at 572–612 (DMDECSIRNMCLNGMCINEDGSFKCICKPGFQLASDGRYCK) folds into the EGF-like 9; calcium-binding domain. The O-linked (Glc) serine glycan is linked to serine 593. The 41-residue stretch at 613 to 653 (DINECETPGICMNGRCVNTDGSYRCECFPGLAVGLDGRVCV) folds into the EGF-like 10; calcium-binding domain. Serine 634 carries O-linked (Glc) serine glycosylation. The TB 3 domain maps to 659-711 (STCYGGYKRGQCIKPLFGAVTKSECCCASTEYAFGEPCQPCPAQNSAEYQALC). The EGF-like 11; calcium-binding domain maps to 723–764 (DINECALDPDICPNGICENLRGTYKCICNSGYEVDSTGKNCV). Intrachain disulfides connect cysteine 727–cysteine 739, cysteine 734–cysteine 748, cysteine 750–cysteine 763, cysteine 769–cysteine 781, cysteine 776–cysteine 790, cysteine 792–cysteine 805, cysteine 811–cysteine 821, cysteine 816–cysteine 830, cysteine 832–cysteine 845, cysteine 853–cysteine 875, cysteine 862–cysteine 887, cysteine 876–cysteine 890, cysteine 896–cysteine 908, cysteine 914–cysteine 926, cysteine 921–cysteine 935, and cysteine 937–cysteine 950. The EGF-like 12; calcium-binding domain occupies 765-806 (DINECVLNSLLCDNGQCRNTPGSFVCTCPKGFIYKPDLKTCE). O-linked (Glc) serine glycosylation is present at serine 787. The EGF-like 13; calcium-binding domain occupies 807 to 846 (DIDECESSPCINGVCKNSPGSFICECSSESTLDPTKTICI). Serine 827 carries O-linked (Glc) serine glycosylation. The region spanning 851–902 (GTCWQTVIDGRCEININGATLKSQCCSSLGAAWGSPCTLCQVDPICGKGYSR) is the TB 4 domain. Residues 862 to 887 (CEININGATLKSQCCSSLGAAWGSPC) form a hybrid domain 2 region. The 42-residue stretch at 910-951 (DIDECEVFPGVCKNGLCVNTRGSFKCQCPSGMTLDATGRICL) folds into the EGF-like 14; calcium-binding domain. Residues 956 to 1008 (ETCFLRYEDEECTLPIAGRHRMDACCCSVGAAWGTEECEECPMRNTPEYEELC) enclose the TB 5 domain. The EGF-like 15; calcium-binding domain maps to 1028–1069 (DINECKMIPSLCTHGKCRNTIGSFKCRCDSGFALDSEERNCT). 46 disulfide bridges follow: cysteine 1032–cysteine 1044, cysteine 1039–cysteine 1053, cysteine 1055–cysteine 1068, cysteine 1074–cysteine 1086, cysteine 1081–cysteine 1095, cysteine 1097–cysteine 1111, cysteine 1117–cysteine 1129, cysteine 1124–cysteine 1138, cysteine 1140–cysteine 1153, cysteine 1159–cysteine 1171, cysteine 1166–cysteine 1180, cysteine 1182–cysteine 1195, cysteine 1201–cysteine 1212, cysteine 1208–cysteine 1221, cysteine 1223–cysteine 1236, cysteine 1242–cysteine 1254, cysteine 1249–cysteine 1263, cysteine 1265–cysteine 1278, cysteine 1284–cysteine 1296, cysteine 1291–cysteine 1305, cysteine 1307–cysteine 1320, cysteine 1326–cysteine 1339, cysteine 1333–cysteine 1348, cysteine 1350–cysteine 1361, cysteine 1367–cysteine 1380, cysteine 1374–cysteine 1389, cysteine 1391–cysteine 1402, cysteine 1408–cysteine 1420, cysteine 1415–cysteine 1429, cysteine 1431–cysteine 1444, cysteine 1450–cysteine 1461, cysteine 1456–cysteine 1470, cysteine 1472–cysteine 1485, cysteine 1491–cysteine 1502, cysteine 1497–cysteine 1511, cysteine 1513–cysteine 1526, cysteine 1534–cysteine 1562, cysteine 1549–cysteine 1574, cysteine 1563–cysteine 1577, cysteine 1564–cysteine 1589, cysteine 1610–cysteine 1622, cysteine 1617–cysteine 1631, cysteine 1633–cysteine 1646, cysteine 1652–cysteine 1663, cysteine 1658–cysteine 1672, and cysteine 1674–cysteine 1687. A glycan (O-linked (Glc) serine) is linked at serine 1050. Residue asparagine 1067 is glycosylated (N-linked (GlcNAc...) asparagine). Residues 1070–1112 (DIDECRISPDLCGRGQCVNTPGDFECKCDEGYESGFMMMKNCM) form the EGF-like 16; calcium-binding domain. In terms of domain architecture, EGF-like 17; calcium-binding spans 1113–1154 (DIDECQRDPLLCRGGVCHNTEGSYRCECPPGHQLSPNISACI). Serine 1135 is a glycosylation site (O-linked (Glc) serine). Asparagine 1149 carries N-linked (GlcNAc...) asparagine glycosylation. The region spanning 1155–1196 (DINECELSAHLCPNGRCVNLIGKYQCACNPGYHSTPDRLFCV) is the EGF-like 18; calcium-binding domain. The region spanning 1197 to 1237 (DIDECSIMNGGCETFCTNSEGSYECSCQPGFALMPDQRSCT) is the EGF-like 19; calcium-binding domain. Serine 1218 carries O-linked (Glc) serine glycosylation. Residues 1238-1279 (DIDECEDNPNICDGGQCTNIPGEYRCLCYDGFMASEDMKTCV) form the EGF-like 20; calcium-binding domain. Positions 1280–1321 (DVNECDLNPNICLSGTCENTKGSFICHCDMGYSGKKGKTGCT) constitute an EGF-like 21; calcium-binding domain. An O-linked (Glc) serine glycan is attached at serine 1302. In terms of domain architecture, EGF-like 22; calcium-binding spans 1322-1362 (DINECEIGAHNCGKHAVCTNTAGSFKCSCSPGWIGDGIKCT). Residue serine 1345 is glycosylated (O-linked (Glc) serine). The EGF-like 23; calcium-binding domain maps to 1363 to 1403 (DLDECSNGTHMCSQHADCKNTMGSYRCLCKEGYTGDGFTCT). The N-linked (GlcNAc...) asparagine glycan is linked to asparagine 1369. A glycan (O-linked (Glc) serine) is linked at serine 1386. Positions 1404 to 1445 (DLDECSENLNLCGNGQCLNAPGGYRCECDMGFVPSADGKACE) constitute an EGF-like 24; calcium-binding domain. Positions 1446–1486 (DIDECSLPNICVFGTCHNLPGLFRCECEIGYELDRSGGNCT) constitute an EGF-like 25; calcium-binding domain. N-linked (GlcNAc...) asparagine glycosylation occurs at asparagine 1484. Residues 1487 to 1527 (DVNECLDPTTCISGNCVNTPGSYICDCPPDFELNPTRVGCV) form the EGF-like 26; calcium-binding domain. Serine 1508 carries O-linked (Glc) serine glycosylation. Residues 1528–2731 (DTRSGNCYLD…GYPKRGRKRR (1204 aa)) form a C-terminal domain region. The TB 6 domain maps to 1532 to 1589 (GNCYLDIRPRGDNGDTACSNEIGVGVSKASCCCSLGKAWGTPCEMCPAVNTSEYKILC). Positions 1541-1543 (RGD) match the Cell attachment site motif. N-linked (GlcNAc...) asparagine glycosylation occurs at asparagine 1581. The EGF-like 27; calcium-binding domain occupies 1606 to 1647 (DIDECQELPGLCQGGKCINTFGSFQCRCPTGYYLNEDTRVCD). An O-linked (Glc) serine glycan is attached at serine 1628. One can recognise an EGF-like 28; calcium-binding domain in the interval 1648 to 1688 (DVNECETPGICGPGTCYNTVGNYTCICPPDYMQVNGGNNCM). A glycan (N-linked (GlcNAc...) asparagine) is linked at asparagine 1669. The 56-residue stretch at 1693-1748 (SLCYRNYYADNQTCDGELLFNMTKKMCCCSYNIGRAWNKPCEQCPIPSTDEFATLC) folds into the TB 7 domain. 2 N-linked (GlcNAc...) asparagine glycosylation sites follow: asparagine 1703 and asparagine 1713. The region spanning 1766-1807 (DIDECREIPGVCENGVCINMVGSFRCECPVGFFYNDKLLVCE) is the EGF-like 29; calcium-binding domain. Disulfide bonds link cysteine 1770/cysteine 1782, cysteine 1777/cysteine 1791, cysteine 1793/cysteine 1806, cysteine 1812/cysteine 1824, cysteine 1818/cysteine 1833, cysteine 1835/cysteine 1847, cysteine 1853/cysteine 1865, cysteine 1860/cysteine 1874, cysteine 1876/cysteine 1889, cysteine 1895/cysteine 1905, cysteine 1900/cysteine 1914, cysteine 1916/cysteine 1928, cysteine 1934/cysteine 1947, cysteine 1942/cysteine 1956, cysteine 1958/cysteine 1971, cysteine 1977/cysteine 1989, cysteine 1984/cysteine 1998, cysteine 2000/cysteine 2011, cysteine 2017/cysteine 2029, cysteine 2024/cysteine 2038, cysteine 2040/cysteine 2053, cysteine 2061/cysteine 2083, cysteine 2070/cysteine 2096, cysteine 2084/cysteine 2099, cysteine 2085/cysteine 2111, cysteine 2131/cysteine 2142, cysteine 2137/cysteine 2151, cysteine 2153/cysteine 2164, cysteine 2170/cysteine 2181, cysteine 2176/cysteine 2190, cysteine 2192/cysteine 2204, cysteine 2210/cysteine 2221, cysteine 2217/cysteine 2230, cysteine 2232/cysteine 2245, cysteine 2251/cysteine 2265, cysteine 2258/cysteine 2274, cysteine 2276/cysteine 2289, cysteine 2295/cysteine 2307, cysteine 2302/cysteine 2316, and cysteine 2318/cysteine 2331. Positions 1808–1848 (DIDECQNGPVCQRNAECINTAGSYRCDCKPGYRFTSTGQCN) constitute an EGF-like 30; calcium-binding domain. A glycan (O-linked (Glc) serine) is linked at serine 1830. Positions 1849-1890 (DRNECQEIPNICSHGQCIDTVGSFYCLCHTGFKTNDDQTMCL) constitute an EGF-like 31; calcium-binding domain. A glycan (O-linked (Glc) serine) is linked at serine 1871. Residues 1891–1929 (DINECERDACGNGTCRNTIGSFNCRCNHGFILSHNNDCI) form the EGF-like 32; calcium-binding domain. N-linked (GlcNAc...) asparagine glycosylation is present at asparagine 1902. An O-linked (Glc) serine glycan is attached at serine 1911. The EGF-like 33; calcium-binding domain maps to 1930-1972 (DVDECASGNGNLCRNGQCINTVGSFQCQCNEGYEVAPDGRTCV). Residue serine 1953 is glycosylated (O-linked (Glc) serine). Residues 1973–2012 (DINECLLEPRKCAPGTCQNLDGSYRCICPPGYSLQNEKCE) enclose the EGF-like 34; calcium-binding domain. Residues 2013-2054 (DIDECVEEPEICALGTCSNTEGSFKCLCPEGFSLSSSGRRCQ) enclose the EGF-like 35; calcium-binding domain. A glycan (O-linked (Glc) serine) is linked at serine 2035. The region spanning 2059–2111 (SYCYAKFEGGKCSSPKSRNHSKQECCCALKGEGWGDPCELCPTEPDEAFRQIC) is the TB 8 domain. Asparagine 2077 carries N-linked (GlcNAc...) asparagine glycosylation. An EGF-like 36; calcium-binding domain is found at 2127 to 2165 (DMDECKEPDVCKHGQCINTDGSYRCECPFGYILAGNECV). O-linked (Glc) serine glycosylation is present at serine 2148. The EGF-like 37; calcium-binding domain occupies 2166-2205 (DTDECSVGNPCGNGTCKNVIGGFECTCEEGFEPGPMMTCE). Asparagine 2178 carries N-linked (GlcNAc...) asparagine glycosylation. Residues 2206–2246 (DINECAQNPLLCAFRCVNTYGSYECKCPVGYVLREDRRMCK) form the EGF-like 38; calcium-binding domain. The O-linked (Glc) serine glycan is linked to serine 2227. In terms of domain architecture, EGF-like 39; calcium-binding spans 2247–2290 (DEDECEEGKHDCTEKQMECKNLIGTYMCICGPGYQRRPDGEGCV). The EGF-like 40; calcium-binding domain maps to 2291 to 2332 (DENECQTKPGICENGRCLNTRGSYTCECNDGFTASPNQDECL). Residue serine 2313 is glycosylated (O-linked (Glc) serine). Residues 2337-2390 (GYCFTEVLQNMCQIGSSNRNPVTKSECCCDGGRGWGPHCEICPFQGTVAFKKLC) enclose the TB 9 domain. The region spanning 2402–2443 (DIDECKVIHDVCRNGECVNDRGSYHCICKTGYTPDITGTSCV) is the EGF-like 41; calcium-binding domain. 21 disulfide bridges follow: cysteine 2406–cysteine 2418, cysteine 2413–cysteine 2427, cysteine 2429–cysteine 2442, cysteine 2448–cysteine 2459, cysteine 2455–cysteine 2468, cysteine 2470–cysteine 2483, cysteine 2489–cysteine 2500, cysteine 2496–cysteine 2509, cysteine 2511–cysteine 2522, cysteine 2528–cysteine 2541, cysteine 2535–cysteine 2550, cysteine 2552–cysteine 2565, cysteine 2571–cysteine 2581, cysteine 2577–cysteine 2590, cysteine 2592–cysteine 2605, cysteine 2611–cysteine 2622, cysteine 2617–cysteine 2631, cysteine 2633–cysteine 2646, cysteine 2652–cysteine 2663, cysteine 2659–cysteine 2672, and cysteine 2674–cysteine 2686. The EGF-like 42; calcium-binding domain maps to 2444–2484 (DLNECNQAPKPCNFICKNTEGSYQCSCPKGYILQEDGRSCK). Serine 2465 is a glycosylation site (O-linked (Glc) serine). The region spanning 2485–2523 (DLDECATKQHNCQFLCVNTIGGFTCKCPPGFTQHHTSCI) is the EGF-like 43; calcium-binding domain. Residues 2524-2566 (DNNECTSDINLCGSKGICQNTPGSFTCECQRGFSLDQTGSSCE) form the EGF-like 44; calcium-binding domain. A glycan (O-linked (Glc) serine) is linked at serine 2547. The region spanning 2567–2606 (DVDECEGNHRCQHGCQNIIGGYRCSCPQGYLQHYQWNQCV) is the EGF-like 45; calcium-binding domain. The region spanning 2607-2647 (DENECLSAHICGGASCHNTLGSYKCMCPAGFQYEQFSGGCQ) is the EGF-like 46; calcium-binding domain. Serine 2628 carries O-linked (Glc) serine glycosylation. In terms of domain architecture, EGF-like 47; calcium-binding spans 2648-2687 (DINECGSAQAPCSYGCSNTEGGYLCGCPPGYFRIGQGHCV). A Phosphoserine; by FAM20C modification is found at serine 2702. Serine 2709 is subject to Phosphoserine. Positions 2726-2746 (RGRKRRSTNETDASNIEDQSE) are disordered. Asparagine 2734 carries an N-linked (GlcNAc...) asparagine glycan. The span at 2735–2746 (ETDASNIEDQSE) shows a compositional bias: polar residues. Residues asparagine 2750 and asparagine 2767 are each glycosylated (N-linked (GlcNAc...) asparagine).

It belongs to the fibrillin family. Interacts with COL16A1. Interacts with integrin alpha-V/beta-3. Interacts with ADAMTS10; this interaction promotes microfibril assembly. Interacts with THSD4; this interaction promotes fibril formation. Interacts (via N-terminal domain) with FBLN2 and FBLN5. Interacts with ELN. Forms a ternary complex with ELN and FBLN2 or FBLN5 and a significant interaction with ELN seen only in the presence of FBLN2 or FBLN5. Interacts (via N-terminal domain) with LTBP2 (via C-terminal domain) in a Ca(+2)-dependent manner. Interacts (via N-terminal domain) with LTBP1 (via C-terminal domain). Interacts with integrins ITGA5:ITGB1, ITGAV:ITGB3 and ITGAV:ITGB6. Interacts (via N-terminal domain) with BMP2, BMP4, BMP7, BMP10 and GDF5. Interacts (via N-terminal domain) with MFAP2 and MFAP5. Interacts with ADAMTSL5. Interacts with MFAP4. Interacts (via N-terminal domain) with TNFSF11 in a Ca(+2)-dependent manner. Interacts (via N-terminal domain) with EFEMP2; this interaction inhibits EFEMP2 binding to LOX and ELN. Post-translationally, cleavage of N- and C-terminus by furin is required for incorporation into the extracellular matrix and assembly into microfibrils. The C-terminus, which corresponds to the Asprosin chain, was initially thought to constitute a propeptide. Fibrillin-1 and Asprosin chains are still linked together during the secretion from cells, but are subsequently separated by furin, an essential step for incorporation of Fibrillin-1 into the nascent microfibrils. In terms of processing, forms intermolecular disulfide bonds either with other fibrillin-1 molecules or with other components of the microfibrils. O-glycosylated on serine residues by POGLUT2 and POGLUT3 which is necessary for efficient protein secretion.

It is found in the secreted. The protein resides in the extracellular space. The protein localises to the extracellular matrix. Functionally, structural component of the 10-12 nm diameter microfibrils of the extracellular matrix, which conveys both structural and regulatory properties to load-bearing connective tissues. Fibrillin-1-containing microfibrils provide long-term force bearing structural support. In tissues such as the lung, blood vessels and skin, microfibrils form the periphery of the elastic fiber, acting as a scaffold for the deposition of elastin. In addition, microfibrils can occur as elastin-independent networks in tissues such as the ciliary zonule, tendon, cornea and glomerulus where they provide tensile strength and have anchoring roles. Fibrillin-1 also plays a key role in tissue homeostasis through specific interactions with growth factors, such as the bone morphogenetic proteins (BMPs), growth and differentiation factors (GDFs) and latent transforming growth factor-beta-binding proteins (LTBPs), cell-surface integrins and other extracellular matrix protein and proteoglycan components. Regulates osteoblast maturation by controlling TGF-beta bioavailability and calibrating TGF-beta and BMP levels, respectively. Negatively regulates osteoclastogenesis by binding and sequestering an osteoclast differentiation and activation factor TNFSF11. This leads to disruption of TNFSF11-induced Ca(2+) signaling and impairment of TNFSF11-mediated nuclear translocation and activation of transcription factor NFATC1 which regulates genes important for osteoclast differentiation and function. Mediates cell adhesion via its binding to cell surface receptors integrins ITGAV:ITGB3 and ITGA5:ITGB1. Binds heparin and this interaction has an important role in the assembly of microfibrils. In terms of biological role, adipokine secreted by white adipose tissue that plays an important regulatory role in the glucose metabolism of liver, muscle and pancreas. Hormone that targets the liver in response to fasting to increase plasma glucose levels. Binds the olfactory receptor OR4M1 at the surface of hepatocytes and promotes hepatocyte glucose release by activating the protein kinase A activity in the liver, resulting in rapid glucose release into the circulation. May act as a regulator of adaptive thermogenesis by inhibiting browning and energy consumption, while increasing lipid deposition in white adipose tissue. Also acts as an orexigenic hormone that increases appetite: crosses the blood brain barrier and exerts effects on the hypothalamus. In the arcuate nucleus of the hypothalamus, asprosin directly activates orexigenic AgRP neurons and indirectly inhibits anorexigenic POMC neurons, resulting in appetite stimulation. Activates orexigenic AgRP neurons via binding to the olfactory receptor OR4M1. May also play a role in sperm motility in testis via interaction with OR4M1 receptor. This Homo sapiens (Human) protein is Fibrillin-1.